Consider the following 308-residue polypeptide: N-acetylgalactosamine kinase AgaK (308 aa).

ATP is bound by residues 4–11 (GLDIGGTK) and 132–139 (GTGGGLCI). Residues His156, Cys174, Cys176, and Cys181 each contribute to the Zn(2+) site.

This sequence belongs to the ROK (NagC/XylR) family.

Its subcellular location is the cytoplasm. The enzyme catalyses N-acetyl-D-galactosamine + ATP = N-acetyl-D-galactosamine 6-phosphate + ADP + H(+). It catalyses the reaction N-acetyl-D-glucosamine + ATP = N-acetyl-D-glucosamine 6-phosphate + ADP + H(+). Involved in the pathway of N-acetyl-D-galactosamine degradation. Catalyzes the phosphorylation of N-acetyl-D-galactosamine (GalNAc) to yield D-galactosamine 6-phosphate (GalN-6-P). It can also phosphorylate N-acetylglucosamine (GlcNAc). In Shewanella sp. (strain ANA-3), this protein is N-acetylgalactosamine kinase AgaK.